We begin with the raw amino-acid sequence, 770 residues long: Metallothionein expression activator (770 aa).

The disordered stretch occupies residues 77–97 (LVPSPKTGDGSSDKKNIDRTW). A phosphoserine mark is found at Ser-80, Ser-122, Ser-247, Ser-249, and Ser-253. A Phosphothreonine modification is found at Thr-259. The tract at residues 286 to 323 (PPPTLISPRMSNTSINGSPSRKYHRQRYPNKSPESNGL) is disordered. The segment covering 294–304 (RMSNTSINGSP) has biased composition (polar residues). 3 positions are modified to phosphoserine: Ser-385, Ser-392, and Ser-483. Phosphothreonine is present on residues Thr-486 and Thr-501. Ser-564 is modified (phosphoserine). C2H2-type zinc fingers lie at residues 603–627 (FECL…IQTH) and 633–657 (YSCD…KISH). The C2H2-type 3; atypical zinc-finger motif lies at 662–685 (YICPCGKRFNREDALMVHRSRMIC). The tract at residues 699 to 770 (LTSPKKSLLD…RTLSNETDAL (72 aa)) is disordered. The segment covering 705 to 745 (SLLDSPHDTSPVKETIARDKDGSVLMKMEEQLRDDMRKHGL) has biased composition (basic and acidic residues). 2 positions are modified to phosphoserine: Ser-709 and Ser-714. Positions 754 to 770 (AHEQNSNRTLSNETDAL) are enriched in polar residues.

It is found in the nucleus. Plays a role in regulating basal-level expression of CUP1. Activates EGT2 transcription in the absence of SWI5. This is Metallothionein expression activator (ACE2) from Saccharomyces cerevisiae (strain ATCC 204508 / S288c) (Baker's yeast).